Reading from the N-terminus, the 168-residue chain is Photosystem I assembly protein Ycf3 (168 aa).

TPR repeat units follow at residues 35 to 68 (AFTY…EIDP), 72 to 105 (SYIL…NPFL), and 120 to 153 (GEQA…TPGN).

The protein belongs to the Ycf3 family.

Its subcellular location is the plastid. The protein localises to the chloroplast thylakoid membrane. Its function is as follows. Essential for the assembly of the photosystem I (PSI) complex. May act as a chaperone-like factor to guide the assembly of the PSI subunits. The polypeptide is Photosystem I assembly protein Ycf3 (Piper cenocladum (Ant piper)).